We begin with the raw amino-acid sequence, 216 residues long: Adenylate kinase (216 aa).

ATP is bound at residue 10–15 (GAGKGT). The interval 30-59 (STGDMLRAAVKAGTPLGLELKKVMDAGQLV) is NMP. AMP contacts are provided by residues Thr-31, Arg-36, 57–59 (QLV), 85–88 (GFPR), and Gln-92. An LID region spans residues 122–159 (GRRVHLASGRTYHIQYNPPKVEGKDDETGEDLIQRDDD). Residues Arg-123 and 132-133 (TY) each bind ATP. 2 residues coordinate AMP: Arg-156 and Arg-167. Gly-202 contributes to the ATP binding site.

This sequence belongs to the adenylate kinase family. Monomer.

The protein resides in the cytoplasm. It carries out the reaction AMP + ATP = 2 ADP. The protein operates within purine metabolism; AMP biosynthesis via salvage pathway; AMP from ADP: step 1/1. In terms of biological role, catalyzes the reversible transfer of the terminal phosphate group between ATP and AMP. Plays an important role in cellular energy homeostasis and in adenine nucleotide metabolism. The polypeptide is Adenylate kinase (Pseudomonas putida (strain ATCC 700007 / DSM 6899 / JCM 31910 / BCRC 17059 / LMG 24140 / F1)).